Here is a 204-residue protein sequence, read N- to C-terminus: Peptide deformylase (204 aa).

The Fe cation site is built by C131 and H174. E175 is a catalytic residue. H178 contributes to the Fe cation binding site.

The protein belongs to the polypeptide deformylase family. It depends on Fe(2+) as a cofactor.

The catalysed reaction is N-terminal N-formyl-L-methionyl-[peptide] + H2O = N-terminal L-methionyl-[peptide] + formate. Functionally, removes the formyl group from the N-terminal Met of newly synthesized proteins. Requires at least a dipeptide for an efficient rate of reaction. N-terminal L-methionine is a prerequisite for activity but the enzyme has broad specificity at other positions. This chain is Peptide deformylase, found in Streptococcus thermophilus (strain CNRZ 1066).